A 185-amino-acid polypeptide reads, in one-letter code: Ribosome-recycling factor (185 aa).

This sequence belongs to the RRF family.

Its subcellular location is the cytoplasm. Responsible for the release of ribosomes from messenger RNA at the termination of protein biosynthesis. May increase the efficiency of translation by recycling ribosomes from one round of translation to another. The sequence is that of Ribosome-recycling factor from Campylobacter jejuni subsp. jejuni serotype O:2 (strain ATCC 700819 / NCTC 11168).